A 172-amino-acid polypeptide reads, in one-letter code: MEYFSVGKIVNTQGLQGEMRVLSVSDFTEERFQKGARLALFDDKDRFVQEVEIASHRKHKQFDIIKFKGMYHINAIEQFKGYSLKIAKENQGKLAEGEFYYHQIIGLEVYEKDQLVGEIKEILQPGANDVWVVKRQSKRDLLLPYIPSVVLCVDIEKHRVDVEIMEGLDDED.

Residues 95–168 (AEGEFYYHQI…RVDVEIMEGL (74 aa)) form the PRC barrel domain.

The protein belongs to the RimM family. In terms of assembly, binds ribosomal protein uS19.

It is found in the cytoplasm. In terms of biological role, an accessory protein needed during the final step in the assembly of 30S ribosomal subunit, possibly for assembly of the head region. Essential for efficient processing of 16S rRNA. May be needed both before and after RbfA during the maturation of 16S rRNA. It has affinity for free ribosomal 30S subunits but not for 70S ribosomes. This is Ribosome maturation factor RimM from Streptococcus equi subsp. equi (strain 4047).